The chain runs to 213 residues: Small ribosomal subunit protein uS5 (213 aa).

Residues 49-112 (LEEEVMDVNL…DNAKYNLIKV (64 aa)) enclose the S5 DRBM domain.

The protein belongs to the universal ribosomal protein uS5 family. Part of the 30S ribosomal subunit. Contacts protein S4.

Functionally, with S4 and S12 plays an important role in translational accuracy. This is Small ribosomal subunit protein uS5 from Methanobrevibacter smithii (strain ATCC 35061 / DSM 861 / OCM 144 / PS).